Reading from the N-terminus, the 183-residue chain is Glutamyl-tRNA(Gln) amidotransferase subunit F, mitochondrial (183 aa).

This sequence belongs to the GatF family. As to quaternary structure, subunit of the heterotrimeric GatFAB amidotransferase (AdT) complex, composed of A (HER2), B (PET112) and F (YGR102C) subunits.

Its subcellular location is the mitochondrion inner membrane. The catalysed reaction is L-glutamyl-tRNA(Gln) + L-glutamine + ATP + H2O = L-glutaminyl-tRNA(Gln) + L-glutamate + ADP + phosphate + H(+). Its function is as follows. Allows the formation of correctly charged Gln-tRNA(Gln) through the transamidation of misacylated Glu-tRNA(Gln) in the mitochondria. The reaction takes place in the presence of glutamine and ATP through an activated gamma-phospho-Glu-tRNA(Gln). Required for proper protein synthesis within the mitochondrion. The sequence is that of Glutamyl-tRNA(Gln) amidotransferase subunit F, mitochondrial from Saccharomyces cerevisiae (strain ATCC 204508 / S288c) (Baker's yeast).